A 132-amino-acid polypeptide reads, in one-letter code: UPF0299 membrane protein CKO_00648 (132 aa).

The next 4 helical transmembrane spans lie at 7–27, 31–51, 63–83, and 93–113; these read IIWQYLRAFVLIYACLYAGIF, LLPITIPGSIIGMLILFVLLA, GCYVLIRYMALLFVPIGVGVM, and FGPVVVSCAISTLVVFLVVSW.

Belongs to the UPF0299 family.

It is found in the cell inner membrane. This Citrobacter koseri (strain ATCC BAA-895 / CDC 4225-83 / SGSC4696) protein is UPF0299 membrane protein CKO_00648.